We begin with the raw amino-acid sequence, 295 residues long: Putative ribose uptake protein RbsU (295 aa).

Transmembrane regions (helical) follow at residues 5–24 (ALLI…TIAS), 34–56 (ILGT…GLAF), 63–80 (FFSI…IITF), 95–114 (TTAF…LGNW), 121–139 (LLGA…MTVW), 154–171 (AVLL…YSAA), 183–205 (FLPQ…TIKG), 220–237 (IFSG…LISA), 244–266 (LATG…IWFL), and 276–293 (TVTI…TITV).

It belongs to the GRP transporter (TC 2.A.7.5) family.

It is found in the cell membrane. In terms of biological role, could be involved in the uptake of ribose. This is Putative ribose uptake protein RbsU (rbsU) from Enterococcus faecalis (strain ATCC 700802 / V583).